Here is a 682-residue protein sequence, read N- to C-terminus: Nisin leader peptide-processing serine protease NisP (682 aa).

Residues 1 to 22 form the signal peptide; the sequence is MKKILGFLFIVCSLGLSATVHG. Residues 23–195 constitute a propeptide that is removed on maturation; it reads ETTNSQQLLS…RKAKEVVSLR (173 aa). Positions 231–566 constitute a Peptidase S8 domain; the sequence is QWDMKYVTNN…VDLLNGKNKA (336 aa). Residues aspartate 259, histidine 306, and serine 512 each act as charge relay system in the active site. The short motif at 652–656 is the LPXTG sorting signal element; it reads LPVTG. Position 655 is a pentaglycyl murein peptidoglycan amidated threonine (threonine 655). Residues 656–682 constitute a propeptide, removed by sortase; it reads GDGEDFLPALGIVCISILGILKRKTKN.

It belongs to the peptidase S8 family.

It localises to the secreted. It is found in the cell wall. It participates in antibiotic biosynthesis; nisin biosynthesis. Its function is as follows. Cleaves the lantibiotic nisin precursor peptide. In Lactococcus lactis subsp. lactis (Streptococcus lactis), this protein is Nisin leader peptide-processing serine protease NisP (nisP).